Here is a 175-residue protein sequence, read N- to C-terminus: Ribosome-binding factor A (175 aa).

The disordered stretch occupies residues Thr125–Lys175. Positions His128–Ala139 are enriched in basic and acidic residues. Acidic residues predominate over residues Pro140–Glu165. Residues Asp166–Lys175 are compositionally biased toward basic and acidic residues.

Belongs to the RbfA family. In terms of assembly, monomer. Binds 30S ribosomal subunits, but not 50S ribosomal subunits or 70S ribosomes.

The protein localises to the cytoplasm. Functionally, one of several proteins that assist in the late maturation steps of the functional core of the 30S ribosomal subunit. Associates with free 30S ribosomal subunits (but not with 30S subunits that are part of 70S ribosomes or polysomes). Required for efficient processing of 16S rRNA. May interact with the 5'-terminal helix region of 16S rRNA. This is Ribosome-binding factor A from Pseudarthrobacter chlorophenolicus (strain ATCC 700700 / DSM 12829 / CIP 107037 / JCM 12360 / KCTC 9906 / NCIMB 13794 / A6) (Arthrobacter chlorophenolicus).